We begin with the raw amino-acid sequence, 201 residues long: Recombination protein RecR (201 aa).

The C4-type zinc finger occupies 60–75 (CETCGNIDTRSPCTIC). One can recognise a Toprim domain in the interval 83-178 (SIIVVVADVA…KVTRLAHGVP (96 aa)).

The protein belongs to the RecR family.

In terms of biological role, may play a role in DNA repair. It seems to be involved in an RecBC-independent recombinational process of DNA repair. It may act with RecF and RecO. The protein is Recombination protein RecR of Nitrobacter winogradskyi (strain ATCC 25391 / DSM 10237 / CIP 104748 / NCIMB 11846 / Nb-255).